We begin with the raw amino-acid sequence, 214 residues long: Small ribosomal subunit protein uS3 (214 aa).

The 69-residue stretch at 39–107 folds into the KH type-2 domain; that stretch reads IRAYLLKKPA…EVWVAVEEVK (69 aa).

This sequence belongs to the universal ribosomal protein uS3 family. Part of the 30S ribosomal subunit. Forms a tight complex with proteins S10 and S14.

Binds the lower part of the 30S subunit head. Binds mRNA in the 70S ribosome, positioning it for translation. This Protochlamydia amoebophila (strain UWE25) protein is Small ribosomal subunit protein uS3.